The following is a 75-amino-acid chain: MGRFLKTAVDALKVFILFTGFTALFYYAMIWVNQEYENYHRYDKPEGSAVKVVEMDQDEKGGWFDRLIFFYQNGE.

A helical transmembrane segment spans residues Leu-12–Val-32.

The protein resides in the cell membrane. This is an uncharacterized protein from Bacillus subtilis (strain 168).